The chain runs to 181 residues: Large ribosomal subunit protein uL5 (181 aa).

This sequence belongs to the universal ribosomal protein uL5 family. Part of the 50S ribosomal subunit; part of the 5S rRNA/L5/L18/L25 subcomplex. Contacts the 5S rRNA and the P site tRNA. Forms a bridge to the 30S subunit in the 70S ribosome.

Its function is as follows. This is one of the proteins that bind and probably mediate the attachment of the 5S RNA into the large ribosomal subunit, where it forms part of the central protuberance. In the 70S ribosome it contacts protein S13 of the 30S subunit (bridge B1b), connecting the 2 subunits; this bridge is implicated in subunit movement. Contacts the P site tRNA; the 5S rRNA and some of its associated proteins might help stabilize positioning of ribosome-bound tRNAs. The protein is Large ribosomal subunit protein uL5 of Helicobacter pylori (strain ATCC 700392 / 26695) (Campylobacter pylori).